A 189-amino-acid chain; its full sequence is Threonylcarbamoyl-AMP synthase (189 aa).

Residues 7–189 (NPRVNYAANM…LLTGQVVRPS (183 aa)) form the YrdC-like domain.

Belongs to the SUA5 family. TsaC subfamily.

The protein resides in the cytoplasm. The catalysed reaction is L-threonine + hydrogencarbonate + ATP = L-threonylcarbamoyladenylate + diphosphate + H2O. In terms of biological role, required for the formation of a threonylcarbamoyl group on adenosine at position 37 (t(6)A37) in tRNAs that read codons beginning with adenine. Catalyzes the conversion of L-threonine, HCO(3)(-)/CO(2) and ATP to give threonylcarbamoyl-AMP (TC-AMP) as the acyladenylate intermediate, with the release of diphosphate. This is Threonylcarbamoyl-AMP synthase from Cellvibrio japonicus (strain Ueda107) (Pseudomonas fluorescens subsp. cellulosa).